Consider the following 131-residue polypeptide: NADH dehydrogenase [ubiquinone] 1 alpha subcomplex subunit 6 (131 aa).

Belongs to the complex I LYR family. Mammalian complex I is composed of 45 different subunits.

It is found in the mitochondrion inner membrane. Accessory subunit of the mitochondrial membrane respiratory chain NADH dehydrogenase (Complex I), that is believed to be not involved in catalysis. Required for proper complex I assembly. Complex I functions in the transfer of electrons from NADH to the respiratory chain. The immediate electron acceptor for the enzyme is believed to be ubiquinone. The polypeptide is NADH dehydrogenase [ubiquinone] 1 alpha subcomplex subunit 6 (Mus musculus (Mouse)).